Here is a 378-residue protein sequence, read N- to C-terminus: Heme chaperone HemW (378 aa).

Positions 1–237 (MVKLPPLSLY…LTAAGYQQYE (237 aa)) constitute a Radical SAM core domain. Residue tyrosine 10 participates in S-adenosyl-L-methionine binding. Positions 16, 20, and 23 each coordinate [4Fe-4S] cluster. S-adenosyl-L-methionine is bound by residues glycine 66, 67–68 (GT), glutamate 99, glutamine 126, arginine 138, and aspartate 163.

It belongs to the anaerobic coproporphyrinogen-III oxidase family. HemW subfamily. In terms of assembly, binding of the [4Fe-4S] cofactor promotes dimerization. The cofactor is [4Fe-4S] cluster.

It is found in the cytoplasm. Its function is as follows. Probably acts as a heme chaperone, transferring heme to the NarI subunit of the respiratory enzyme nitrate reductase; transfer may be stimulated by NADH. Binds one molecule of heme per monomer, possibly covalently. Heme binding is not affected by either [4Fe-4S] or S-adenosyl-L-methionine (SAM)-binding. Does not have coproporphyrinogen III dehydrogenase activity in vitro. Binds 1 [4Fe-4S] cluster. The cluster is coordinated with 3 cysteines and an exchangeable S-adenosyl-L-methionine. The protein is Heme chaperone HemW of Escherichia coli (strain K12).